A 503-amino-acid polypeptide reads, in one-letter code: 2,3-bisphosphoglycerate-independent phosphoglycerate mutase (503 aa).

Positions 10 and 60 each coordinate Mn(2+). S60 (phosphoserine intermediate) is an active-site residue. Residues H121, 150 to 151, R181, R187, 256 to 259, and K330 each bind substrate; these read RD and RPDR. Mn(2+)-binding residues include D396, H400, D437, H438, and H455.

It belongs to the BPG-independent phosphoglycerate mutase family. As to quaternary structure, monomer. The cofactor is Mn(2+).

It catalyses the reaction (2R)-2-phosphoglycerate = (2R)-3-phosphoglycerate. It participates in carbohydrate degradation; glycolysis; pyruvate from D-glyceraldehyde 3-phosphate: step 3/5. In terms of biological role, catalyzes the interconversion of 2-phosphoglycerate and 3-phosphoglycerate. This chain is 2,3-bisphosphoglycerate-independent phosphoglycerate mutase, found in Mycoplasmoides gallisepticum (strain R(low / passage 15 / clone 2)) (Mycoplasma gallisepticum).